A 257-amino-acid polypeptide reads, in one-letter code: Deoxyribose-phosphate aldolase (257 aa).

Catalysis depends on Asp102, which acts as the Proton donor/acceptor. Residue Lys165 is the Schiff-base intermediate with acetaldehyde of the active site. Residue Lys199 is the Proton donor/acceptor of the active site.

Belongs to the DeoC/FbaB aldolase family. DeoC type 2 subfamily.

The protein resides in the cytoplasm. It carries out the reaction 2-deoxy-D-ribose 5-phosphate = D-glyceraldehyde 3-phosphate + acetaldehyde. Its pathway is carbohydrate degradation; 2-deoxy-D-ribose 1-phosphate degradation; D-glyceraldehyde 3-phosphate and acetaldehyde from 2-deoxy-alpha-D-ribose 1-phosphate: step 2/2. Catalyzes a reversible aldol reaction between acetaldehyde and D-glyceraldehyde 3-phosphate to generate 2-deoxy-D-ribose 5-phosphate. The protein is Deoxyribose-phosphate aldolase of Photobacterium profundum (strain SS9).